A 302-amino-acid polypeptide reads, in one-letter code: NAD kinase 2 (302 aa).

Aspartate 79 (proton acceptor) is an active-site residue. NAD(+) is bound by residues 79 to 80 (DG), 153 to 154 (NE), aspartate 183, 194 to 199 (TAYSLS), alanine 218, and asparagine 252.

It belongs to the NAD kinase family. It depends on a divalent metal cation as a cofactor.

The protein localises to the cytoplasm. It catalyses the reaction NAD(+) + ATP = ADP + NADP(+) + H(+). Its function is as follows. Involved in the regulation of the intracellular balance of NAD and NADP, and is a key enzyme in the biosynthesis of NADP. Catalyzes specifically the phosphorylation on 2'-hydroxyl of the adenosine moiety of NAD to yield NADP. The polypeptide is NAD kinase 2 (Prochlorococcus marinus subsp. pastoris (strain CCMP1986 / NIES-2087 / MED4)).